Here is a 156-residue protein sequence, read N- to C-terminus: Transcription antitermination protein NusB (156 aa).

The protein belongs to the NusB family.

Involved in transcription antitermination. Required for transcription of ribosomal RNA (rRNA) genes. Binds specifically to the boxA antiterminator sequence of the ribosomal RNA (rrn) operons. This is Transcription antitermination protein NusB from Mycolicibacterium paratuberculosis (strain ATCC BAA-968 / K-10) (Mycobacterium paratuberculosis).